The sequence spans 112 residues: Photosystem II reaction center Psb28 protein (112 aa).

Belongs to the Psb28 family. Part of the photosystem II complex.

The protein resides in the cellular thylakoid membrane. The polypeptide is Photosystem II reaction center Psb28 protein (Microcystis aeruginosa (strain NIES-843 / IAM M-2473)).